We begin with the raw amino-acid sequence, 98 residues long: NADH-ubiquinone oxidoreductase chain 4L (98 aa).

A run of 3 helical transmembrane segments spans residues 1-21 (MSMVYANIFLAFIMSLMGLLM), 29-49 (SLLCLEGMMLSLFVMMTVTIL), and 61-81 (IILLVFAACEAALGLSLLVMV).

The protein belongs to the complex I subunit 4L family. Core subunit of respiratory chain NADH dehydrogenase (Complex I) which is composed of 45 different subunits.

The protein resides in the mitochondrion inner membrane. The catalysed reaction is a ubiquinone + NADH + 5 H(+)(in) = a ubiquinol + NAD(+) + 4 H(+)(out). Functionally, core subunit of the mitochondrial membrane respiratory chain NADH dehydrogenase (Complex I) which catalyzes electron transfer from NADH through the respiratory chain, using ubiquinone as an electron acceptor. Part of the enzyme membrane arm which is embedded in the lipid bilayer and involved in proton translocation. The protein is NADH-ubiquinone oxidoreductase chain 4L (MT-ND4L) of Erignathus barbatus (Bearded seal).